Here is a 463-residue protein sequence, read N- to C-terminus: Glycerol-3-phosphate acyltransferase, chloroplastic (463 aa).

The transit peptide at 1-91 directs the protein to the chloroplast; the sequence is MSIFFSPSSP…AATQPSAGSD (91 aa). Disordered stretches follow at residues 18 to 37 and 65 to 95; these read NANP…TPPL and AETV…HGHS. Low complexity-rich tracts occupy residues 24–37 and 74–90; these read SPSS…TPPL and PSPS…SAGS. The HXXXXD motif signature appears at 229-234; it reads HQTEAD.

Belongs to the GPAT/DAPAT family.

Its subcellular location is the plastid. It localises to the chloroplast stroma. It carries out the reaction sn-glycerol 3-phosphate + an acyl-CoA = a 1-acyl-sn-glycero-3-phosphate + CoA. The protein operates within phospholipid metabolism; CDP-diacylglycerol biosynthesis; CDP-diacylglycerol from sn-glycerol 3-phosphate: step 1/3. Functionally, esterifies acyl-group from acyl-ACP to the sn-1 position of glycerol-3-phosphate. The enzyme from chilling-resistant plants discriminates against non-fluid palmitic acid and selects oleic acid whereas the enzyme from sensitive plants accepts both fatty acids. In Carthamus tinctorius (Safflower), this protein is Glycerol-3-phosphate acyltransferase, chloroplastic.